The following is a 382-amino-acid chain: Glutamyl-tRNA reductase (382 aa).

Substrate contacts are provided by residues 38-41 (TCNR), S85, 90-92 (ENQ), and Q96. The active-site Nucleophile is C39. 164-169 (GAGEMG) provides a ligand contact to NADP(+).

The protein belongs to the glutamyl-tRNA reductase family. In terms of assembly, homodimer.

The catalysed reaction is (S)-4-amino-5-oxopentanoate + tRNA(Glu) + NADP(+) = L-glutamyl-tRNA(Glu) + NADPH + H(+). It participates in porphyrin-containing compound metabolism; protoporphyrin-IX biosynthesis; 5-aminolevulinate from L-glutamyl-tRNA(Glu): step 1/2. Functionally, catalyzes the NADPH-dependent reduction of glutamyl-tRNA(Glu) to glutamate 1-semialdehyde (GSA). The polypeptide is Glutamyl-tRNA reductase (Methanococcus maripaludis (strain C6 / ATCC BAA-1332)).